A 555-amino-acid chain; its full sequence is MLIDRLAGAVPAHAWPTITVAGAVMVVVLLMRYLDYDKKVEVPVIGPGGRFTKWLGAIRNVWYAREAIHEVANGQHGKLGFQIPTMTRMDVFICDRALTREYYSLDEDHMSFRAVMSEEFQFKWLLPGQHHDVHRIPNSVIAKALSWQRTRASKADDPFFREFSAEFLYGFQEEMRAFTGCGNKSRLPFFSHAGDHTSGNSGWIAAPCFPLALKVIARLTTKSLFGEPLCRNPKFLDMCCEFGDAVPRDAMILRCFPDFIRPLLARFLAAPRGVKELQTVVLNEITSRRNSREKNPMKDLLDFSINWIDEHSADGWEDWHIADMMTNTVFAALHTSSQLVTHTLFELATRPEYVVPLREEIRQCFALYGNGTKAAIDAMHKMDSFIKETQRCNPLDASALARLVLKPYTFSNGLHVPKGSFIFTPNSPLFEDEQFYEDAKRFDGLRFARMRDDPKRKSDSPMTATSEYSMHFGIGRHACPGRYMVSDEVKLVMVHLLLHYDFAMANFGPRPKNMAFGKFILPDMQAKVWLRKSKDAGNTARVDPGAPDGVASEPS.

The chain crosses the membrane as a helical span at residues 10-30 (VPAHAWPTITVAGAVMVVVLL). Residue C479 coordinates heme. A disordered region spans residues 535–555 (DAGNTARVDPGAPDGVASEPS).

Belongs to the cytochrome P450 family. It depends on heme as a cofactor.

It localises to the membrane. It functions in the pathway secondary metabolite biosynthesis. Cytochrome P450 monooxygeanse; part of the gene cluster that mediates the biosynthesis of terpendoles, indole-diterpene (IDT) mycotoxins including terpendole I, terpendole K, terpendole C, as well as the kinesin Eg5 inhibitor terpendole E. TerQ is a C11-hydroxylating enzyme that converts paspalline into terpendole E. Is also able to hydroxylate 13-desoxyterpendole I at C-13 to produce terpendole I. Terpendoles biosynthesis begins with the synthesis of geranylgeranyl diphosphate (GGPP) by a yet unidentified GGPP synthase. Condensation of indole-3-glycerol phosphate with GGPP by the prenyltransferase terC then forms 3-geranylgeranylindole (3-GGI), followed by epoxidation and cyclization of this intermediate (by the FAD-dependent monooxygeanse terM and the terpene cyclase terB) to form paspaline. The cytochrome monooxygenase terQ then hydroxylates paspalline at C-11 to yield terpendole E. The cytochrome monooxygenase terP converts terpendole E to 13-desoxyterpendole I, and terQ converts 13-desoxyterpendole I into terpendole I. TerF and terK are required for conversion of terpendole I to terpendole C which is further converted to terpendole K. The polypeptide is Cytochrome P450 monooxygeanse terQ (Tolypocladium album (Soil fungus)).